The chain runs to 379 residues: Sperm microtubule associated protein 2 (379 aa).

A disordered region spans residues 1–82; the sequence is MGDSRRRSLG…EFPETLDPKE (82 aa). Basic and acidic residues-rich tracts occupy residues 19–29 and 38–50; these read GRSEREQDGDP and ESRR…RQDL. Acidic residues predominate over residues 56–76; sequence GPEDPEEELPPEEVAGEEFPE. THEG repeat units follow at residues 118-137, 184-203, 222-241, 258-277, 290-309, and 326-345; these read KARK…PKIN, TITV…PKRF, SSLE…PKIR, AAQM…PKAP, PKPH…PKAQ, and VTKK…PKVR. Ser-295 is subject to Phosphoserine. Residues 344 to 379 form a disordered region; the sequence is VRKGLNEGYDRRPLASMSLPPPKASPEKCDQPRPGL. 2 stretches are compositionally biased toward basic and acidic residues: residues 347–356 and 368–379; these read GLNEGYDRRP and SPEKCDQPRPGL.

In terms of assembly, interacts with CCT5. As to expression, testis specific.

It is found in the nucleus. In terms of biological role, may be involved (but not essential) in spermatogenesis. The polypeptide is Sperm microtubule associated protein 2 (Homo sapiens (Human)).